The following is a 196-amino-acid chain: Probable malonic semialdehyde reductase RutE (196 aa).

The protein belongs to the nitroreductase family. HadB/RutE subfamily. FMN serves as cofactor.

The enzyme catalyses 3-hydroxypropanoate + NADP(+) = 3-oxopropanoate + NADPH + H(+). Its function is as follows. May reduce toxic product malonic semialdehyde to 3-hydroxypropionic acid, which is excreted. This Escherichia coli O139:H28 (strain E24377A / ETEC) protein is Probable malonic semialdehyde reductase RutE.